The primary structure comprises 1666 residues: Cortactin-binding protein 2 (1666 aa).

5 disordered regions span residues 1 to 25 (MATD…APAE), 202 to 224 (EKKR…AEME), 366 to 411 (IVSS…PAIQ), 457 to 481 (NANN…SPTS), and 501 to 619 (RFTS…PKPS). Residues 120–274 (KMQERMSTQL…MTEQLKRGND (155 aa)) adopt a coiled-coil conformation. Composition is skewed to low complexity over residues 385 to 398 (GPST…PSST) and 457 to 468 (NANNDQDQNGNN). The span at 469 to 481 (TQSPPSRDVSPTS) shows a compositional bias: polar residues. At Arg-501 the chain carries Asymmetric dimethylarginine. ANK repeat units follow at residues 712–742 (GRPT…DINH), 746–775 (DGHS…QVNA), 779–808 (DGFT…NINH), 812–841 (EGQT…DRSV), 845–874 (DGWT…PACG), and 915–945 (EGWT…EPER). The residue at position 1527 (Ser-1527) is a Phosphoserine. The segment covering 1545-1566 (SESDISKIADTRDDLRRFDSSR) has biased composition (basic and acidic residues). Disordered stretches follow at residues 1545-1601 (SESD…RSNR) and 1620-1666 (RSKI…KPNQ). Polar residues predominate over residues 1585–1594 (KEVSPLSSHQ). Over residues 1627-1641 (SQNTKRSSSSSNTRQ) the composition is skewed to low complexity. The span at 1648–1666 (SKDEIWNLRNNEQIEKPNQ) shows a compositional bias: basic and acidic residues.

As to quaternary structure, interacts with CTTN/cortactin SH3 domain. Interacts with STRN, STRN4/zinedin and MOB4/phocein; this interactions mediate the association with the STRIPAK core complex and may regulate dendritic spine distribution of the STRIPAK complex in hippocampal neurons. Activation of glutamate receptors weakens the interaction with STRN and STRN4.

The protein resides in the cytoplasm. It is found in the cell cortex. It localises to the cell projection. Its subcellular location is the dendritic spine. Its function is as follows. Regulates the dendritic spine distribution of CTTN/cortactin in hippocampal neurons, and thus controls dendritic spinogenesis and dendritic spine maintenance. Associates with the striatin-interacting phosphatase and kinase (STRIPAK) core complex to regulate dendritic spine distribution of the STRIPAK complex in hippocampal neurons. This is Cortactin-binding protein 2 (CTTNBP2) from Echinops telfairi (Lesser hedgehog tenrec).